The following is a 184-amino-acid chain: Phosphonoformate cytidylyltransferase (184 aa).

It catalyses the reaction phosphonoformate + CTP = CMP-5'-phosphonoformate + diphosphate. The protein operates within secondary metabolite biosynthesis; bialaphos biosynthesis. Catalyzes the displacement of the beta- and gamma-phosphates of CTP by phosphonoformate to produce CMP-5'-phosphonoformate, an intermediate in the biosynthesis of phosphinothricin tripeptide (PTT), also known as bialaphos (BA), a natural-product antibiotic and potent herbicide. In Streptomyces viridochromogenes (strain DSM 40736 / JCM 4977 / BCRC 1201 / Tue 494), this protein is Phosphonoformate cytidylyltransferase.